A 309-amino-acid chain; its full sequence is Succinate dehydrogenase [ubiquinone] iron-sulfur subunit 3, mitochondrial (309 aa).

The transit peptide at 1-22 (MSSVLRLLGRRICNPAAEKVRL) directs the protein to the mitochondrion. Residues 69–160 (FKIYRWNPDK…PTIITPLPHM (92 aa)) form the 2Fe-2S ferredoxin-type domain. [2Fe-2S] cluster-binding residues include Cys-120, Cys-125, and Cys-140. Residues 202 to 232 (DRKKLDGLYECILCACCTTSCPSYWWNPEEF) form the 4Fe-4S ferredoxin-type domain. Residues Cys-212, Cys-215, and Cys-218 each contribute to the [4Fe-4S] cluster site. A [3Fe-4S] cluster-binding site is contributed by Cys-222. Trp-227 contributes to the a ubiquinone binding site. Positions 270 and 276 each coordinate [3Fe-4S] cluster. Residue Cys-280 coordinates [4Fe-4S] cluster.

Belongs to the succinate dehydrogenase/fumarate reductase iron-sulfur protein family. As to quaternary structure, component of complex II composed of eight subunits in plants: four classical SDH subunits SDH1, SDH2, SDH3 and SDH4 (a flavoprotein (FP), an iron-sulfur protein (IP), and a cytochrome b composed of a large and a small subunit.), as well as four subunits unknown in mitochondria from bacteria and heterotrophic eukaryotes. It depends on [2Fe-2S] cluster as a cofactor. The cofactor is [3Fe-4S] cluster. [4Fe-4S] cluster serves as cofactor.

The protein resides in the mitochondrion inner membrane. It carries out the reaction a quinone + succinate = fumarate + a quinol. It participates in carbohydrate metabolism; tricarboxylic acid cycle; fumarate from succinate (eukaryal route): step 1/1. Its function is as follows. Iron-sulfur protein (IP) subunit of succinate dehydrogenase (SDH) that is involved in complex II of the mitochondrial electron transport chain and is responsible for transferring electrons from succinate to ubiquinone (coenzyme Q). The protein is Succinate dehydrogenase [ubiquinone] iron-sulfur subunit 3, mitochondrial (SDH2-3) of Arabidopsis thaliana (Mouse-ear cress).